Here is a 277-residue protein sequence, read N- to C-terminus: Large ribosomal subunit protein uL2 (277 aa).

A disordered region spans residues 222-277; it reads GVTMNPVDHPHGGGEGRTSGGRHPVTPWGKPTKGKKTRSNKSTNKFILISRHKRKK.

The protein belongs to the universal ribosomal protein uL2 family. Part of the 50S ribosomal subunit. Forms a bridge to the 30S subunit in the 70S ribosome.

One of the primary rRNA binding proteins. Required for association of the 30S and 50S subunits to form the 70S ribosome, for tRNA binding and peptide bond formation. It has been suggested to have peptidyltransferase activity; this is somewhat controversial. Makes several contacts with the 16S rRNA in the 70S ribosome. In Rhodopseudomonas palustris (strain BisB18), this protein is Large ribosomal subunit protein uL2.